The primary structure comprises 605 residues: Lysophospholipase 1 (605 aa).

The signal sequence occupies residues 1–17 (MILHHLLILLIINYCVA). Positions 30–565 (SCPSSQLIRS…ENYCWDGTIY (536 aa)) constitute a PLA2c domain. N-linked (GlcNAc...) asparagine glycans are attached at residues N199, N261, N399, N451, N465, N492, and N573.

It belongs to the lysophospholipase family.

The protein resides in the secreted. It catalyses the reaction a 1-acyl-sn-glycero-3-phosphocholine + H2O = sn-glycerol 3-phosphocholine + a fatty acid + H(+). Its function is as follows. Catalyzes the release of fatty acids from lysophospholipids. Phospholipase B may well contribute to pathogenicity by abetting the fungus in damaging and traversing host cell membranes, processes which likely increase the rapidity of disseminated infection. The polypeptide is Lysophospholipase 1 (Candida albicans (strain SC5314 / ATCC MYA-2876) (Yeast)).